The following is a 131-amino-acid chain: UPF0102 protein YraN (131 aa).

Residues 1-19 are compositionally biased toward polar residues; sequence MATVPTRSGSPRQLTTKQT. The segment at 1-21 is disordered; that stretch reads MATVPTRSGSPRQLTTKQTGD.

Belongs to the UPF0102 family.

This Shigella flexneri serotype 5b (strain 8401) protein is UPF0102 protein YraN.